The chain runs to 821 residues: Protein SCAR1 (821 aa).

Disordered regions lie at residues 168-189 (KRAS…QRGR), 205-289 (TCTS…RGSS), and 577-625 (TSLP…RESK). Residues 206 to 225 (CTSLSFSGRTSTSKTASTIE) are compositionally biased toward polar residues. Positions 226–250 (IESKSDLQEHRSFSFDSRSGGEKPK) are enriched in basic and acidic residues. Positions 252-265 (VSSSSRFTPGSRTI) are enriched in polar residues. The span at 592–612 (SSSYISDNSDNDNRSVSMSEQ) shows a compositional bias: low complexity. Residues 756–774 (EAGDFLHQIRTKQFNLRRV) enclose the WH2 domain. The disordered stretch occupies residues 802–821 (QAVASDDGEGESDTWSDSDT). Over residues 807-821 (DDGEGESDTWSDSDT) the composition is skewed to acidic residues.

This sequence belongs to the SCAR/WAVE family. In terms of assembly, binds BRK1 and actin. Interacts with SPK1, ABI1 and ABI2. Expressed in expanding cotyledons, expanding leaves and expanding siliques containing developing embryos. Detected in unopened flower buds and in the expanding tip region of roots. Reduced expression in mature leaves and mature cotyledons.

The protein localises to the cytoplasm. The protein resides in the cytoskeleton. Involved in regulation of actin and microtubule organization. Part of a WAVE complex that activates the Arp2/3 complex. Regulates trichome branch positioning and expansion. The polypeptide is Protein SCAR1 (SCAR1) (Arabidopsis thaliana (Mouse-ear cress)).